Reading from the N-terminus, the 1407-residue chain is DNA-directed RNA polymerase subunit beta' (1407 aa).

Zn(2+) is bound by residues Cys-70, Cys-72, Cys-85, and Cys-88. 3 residues coordinate Mg(2+): Asp-460, Asp-462, and Asp-464. Zn(2+) is bound by residues Cys-814, Cys-888, Cys-895, and Cys-898. Lys-972 carries the post-translational modification N6-acetyllysine.

This sequence belongs to the RNA polymerase beta' chain family. In terms of assembly, the RNAP catalytic core consists of 2 alpha, 1 beta, 1 beta' and 1 omega subunit. When a sigma factor is associated with the core the holoenzyme is formed, which can initiate transcription. Requires Mg(2+) as cofactor. Zn(2+) is required as a cofactor.

The catalysed reaction is RNA(n) + a ribonucleoside 5'-triphosphate = RNA(n+1) + diphosphate. Functionally, DNA-dependent RNA polymerase catalyzes the transcription of DNA into RNA using the four ribonucleoside triphosphates as substrates. This chain is DNA-directed RNA polymerase subunit beta', found in Escherichia coli O1:K1 / APEC.